Consider the following 150-residue polypeptide: Plasmin C (150 aa).

The N-terminal stretch at 1–14 (MRSFFLLCALVAVC) is a signal peptide.

The protein is Plasmin C (PLSC) of Physarum polycephalum (Slime mold).